Here is a 716-residue protein sequence, read N- to C-terminus: Lamin-like protein (716 aa).

Composition is skewed to basic residues over residues 1–10 (MDMSKKKSKR) and 35–45 (KKTKTTTKKKA). A disordered region spans residues 1 to 107 (MDMSKKKSKR…TIQSIPTTPI (107 aa)). Positions 62-107 (ITTTTTSTSTTNNNNITTTSTSSQQSNGTLSSSSSPTIQSIPTTPI) are enriched in low complexity. The stretch at 130-450 (LREKDELSLI…KMRKQMADLK (321 aa)) forms a coiled coil. The region spanning 132-515 (EKDELSLIHN…ELVKGFEKTV (384 aa)) is the IF rod domain. Residues 519–522 (KRKR) carry the Nuclear localization signal motif. Residues 519-584 (KRKRSKLQHE…PTGPEQSELF (66 aa)) are disordered. Positions 532 to 545 (AANQDQNGMTIEEQ) are enriched in polar residues. Residues 546–564 (SSTSTTTTTSATGSSSSTS) show a composition bias toward low complexity. Over residues 565–584 (HLDNIDSSKLPTGPEQSELF) the composition is skewed to polar residues. Residues 575-698 (PTGPEQSELF…EETTTVTLPA (124 aa)) enclose the LTD domain. A CAAX motif motif is present at residues 713–716 (CLIM).

This sequence belongs to the intermediate filament family. As to quaternary structure, homodimer. Lamin dimers then assemble into dimeric head-to-tail polymers. Ultimately, two head-to-tail polymers assemble laterally into a protofilament with a uniformly shaped rod of 3.5 nm in diameter.

Its subcellular location is the nucleus lamina. It localises to the nucleus envelope. The protein resides in the nucleus inner membrane. Lamins are intermediate filament proteins that assemble into a filamentous meshwork, and which constitute the major components of the nuclear lamina, a fibrous layer on the nucleoplasmic side of the inner nuclear membrane. Lamins provide a framework for the nuclear envelope, bridging the nuclear envelope and chromatin, thereby playing an important role in nuclear assembly, chromatin organization, nuclear membrane and telomere dynamics. The structural integrity of the lamina is strictly controlled by the cell cycle, as seen by the disintegration and formation of the nuclear envelope in prophase and telophase, respectively. Helps to maintain integrity of nuclear structures in response to mechanical stress. This Dictyostelium discoideum (Social amoeba) protein is Lamin-like protein.